Here is a 432-residue protein sequence, read N- to C-terminus: Interleukin-11 receptor subunit alpha-2 (432 aa).

Positions 1 to 23 (MSSSCSGLTRVLVAVATALVSSS) are cleaved as a signal peptide. Residues 24 to 372 (SPCPQAWGPP…DPLEQVAVLA (349 aa)) lie on the Extracellular side of the membrane. Residues 27–110 (PQAWGPPGVQ…SGGMVTLKLG (84 aa)) form the Ig-like C2-type domain. 3 cysteine pairs are disulfide-bonded: cysteine 48/cysteine 94, cysteine 120/cysteine 130, and cysteine 170/cysteine 180. Fibronectin type-III domains follow at residues 112–219 (PPAR…LRPD) and 220–317 (PPQG…TPST). Residue asparagine 127 is glycosylated (N-linked (GlcNAc...) asparagine). The tract at residues 151-170 (KTLPGAESQRESPSTGPWPC) is disordered. Asparagine 194 carries N-linked (GlcNAc...) asparagine glycosylation. The short motif at 304-308 (WSAWS) is the WSXWS motif element. A helical membrane pass occupies residues 373-393 (SLGIFSCLGLAVGALALGLWL). Over 394–432 (RLRRSGKEGPQKPGLLAPMIPVEKLPGIPNLQRTPENFS) the chain is Cytoplasmic.

It belongs to the type I cytokine receptor family. Type 3 subfamily. In terms of assembly, on ligand binding, forms a multimer complex with IL6ST/gp130. As to expression, expression restricted to testis, lymph node and thymus. Highest level in testis.

Its subcellular location is the membrane. Receptor for interleukin-11. The receptor systems for IL6, LIF, OSM, CNTF, IL11 and CT1 can utilize IL6ST for initiating signal transmission. The IL11/IL11RA/IL6ST complex may be involved in the control of proliferation and/or differentiation of skeletogenic progenitor or other mesenchymal cells. The chain is Interleukin-11 receptor subunit alpha-2 (Il11ra2) from Mus musculus (Mouse).